Reading from the N-terminus, the 301-residue chain is MEYFELILKTKKDLEEPIIAILEILGSKGTAIEDNFFDNSVLWDYVDEEFAERDYVLIRSYFDKDTDMEEIINRLKARIKENFEGLGDVEDVEYRVVKEEDWANEWKKYAKPIYVGRILILPSWEKVDTTEDKILVIMDPGMAFGSGSHPTTIMCIEMLQKYLKEGMDVLDVGTGSGILSIVAKKLGAGKVKGIDIDKKAVEVAKENAKRNNVELEFQQANLTIGIEDKYDIVVANLIAEIILKLNSEVKRVLKESGVYITSGIIGEKLDMVLKSFEENNIKILEIREKEGWFTVVGKNED.

The S-adenosyl-L-methionine site is built by Thr-152, Gly-173, Asp-195, and Asn-236.

Belongs to the methyltransferase superfamily. PrmA family.

It localises to the cytoplasm. It carries out the reaction L-lysyl-[protein] + 3 S-adenosyl-L-methionine = N(6),N(6),N(6)-trimethyl-L-lysyl-[protein] + 3 S-adenosyl-L-homocysteine + 3 H(+). Functionally, methylates ribosomal protein L11. This chain is Ribosomal protein L11 methyltransferase, found in Dictyoglomus thermophilum (strain ATCC 35947 / DSM 3960 / H-6-12).